Reading from the N-terminus, the 392-residue chain is GDP-mannose transporter (392 aa).

Residues 1–11 (MDDKKNEDLEM) are compositionally biased toward basic and acidic residues. The interval 1-25 (MDDKKNEDLEMRNFNGRSSPSQRDP) is disordered. At 1-45 (MDDKKNEDLEMRNFNGRSSPSQRDPFLAKPGAAAKRGNSAFDLSN) the chain is on the cytoplasmic side. A helical membrane pass occupies residues 46-66 (VTNSPGISILAYCLASISMTV). Residues 67–76 (TNKYCVSGSN) lie on the Lumenal side of the membrane. A helical transmembrane segment spans residues 77-97 (WNLNFFYLAIQSVVCIIAIII). Topologically, residues 98–116 (CKQAGLITNLAPFDTKKAK) are cytoplasmic. The helical transmembrane segment at 117 to 139 (TWFPISLLLVGMIYTSTKALQFL) threads the bilayer. Over 140 to 142 (SVP) the chain is Lumenal. Residues 143–165 (VYTIFKNLTIIVIAYGEVLWFGG) traverse the membrane as a helical segment. At 166-171 (SVTPSA) the chain is on the cytoplasmic side. The helical transmembrane segment at 172-191 (LFSFGLMVLSSVVAAWADIQ) threads the bilayer. Topologically, residues 192-210 (HALYGGGAAQSAEAAAALS) are lumenal. The chain crosses the membrane as a helical span at residues 211–231 (TLNAGYAWMGMNVFCTAAYVL). Topologically, residues 232–246 (SMRKVIKKMNFKDWD) are cytoplasmic. The helical transmembrane segment at 247 to 267 (TMFYNNLLTIPVLFVCSFIFE) threads the bilayer. Residues N268 and N273 are each glycosylated (N-linked (GlcNAc...) asparagine). Residues 268-285 (NWSSENLTKNFPLETRNN) lie on the Lumenal side of the membrane. Residues 286–306 (LILGMIYSGLATIFISYCSAW) form a helical membrane-spanning segment. The Cytoplasmic segment spans residues 307–314 (CIRVTSST). A helical membrane pass occupies residues 315 to 337 (TYSMVGALNKLPIAVSGLVFFAA). At 338–340 (PVT) the chain is on the lumenal side. A helical membrane pass occupies residues 341 to 360 (FGSVSAIFIGFVSGIVYAWA). Residues 361–392 (KVRQNQSKGNILPTTQPVMSASSQSNRDAAKA) are Cytoplasmic-facing. The tract at residues 373 to 392 (PTTQPVMSASSQSNRDAAKA) is disordered.

This sequence belongs to the TPT transporter family. SLC35D subfamily. In terms of assembly, homooligomer.

The protein localises to the golgi apparatus membrane. The protein resides in the cytoplasmic vesicle membrane. It localises to the endoplasmic reticulum membrane. Its function is as follows. Involved in the import of GDP-mannose from the cytoplasm into the Golgi lumen. The sequence is that of GDP-mannose transporter (gmt1) from Botryotinia fuckeliana (strain B05.10) (Noble rot fungus).